The chain runs to 217 residues: Adenylate kinase (217 aa).

10–15 (GAGKGT) contacts ATP. The tract at residues 30–59 (STGDMFREAVAAGTELGVKVQNILSSGALV) is NMP. Residues T31, R36, 57 to 59 (ALV), 85 to 88 (GYPR), and Q92 each bind AMP. Residues 126 to 163 (SRRICPKCGKIYNLISMPPVSDQICDDCGEQLVIREDD) are LID. R127 contributes to the ATP binding site. C130 and C133 together coordinate Zn(2+). Position 136–137 (136–137 (IY)) interacts with ATP. Residues C150 and C153 each coordinate Zn(2+). The AMP site is built by R160 and R171. Position 199 (R199) interacts with ATP.

The protein belongs to the adenylate kinase family. Monomer.

The protein resides in the cytoplasm. It carries out the reaction AMP + ATP = 2 ADP. Its pathway is purine metabolism; AMP biosynthesis via salvage pathway; AMP from ADP: step 1/1. Its function is as follows. Catalyzes the reversible transfer of the terminal phosphate group between ATP and AMP. Plays an important role in cellular energy homeostasis and in adenine nucleotide metabolism. This chain is Adenylate kinase, found in Pseudothermotoga lettingae (strain ATCC BAA-301 / DSM 14385 / NBRC 107922 / TMO) (Thermotoga lettingae).